Here is a 204-residue protein sequence, read N- to C-terminus: Inactive ribonuclease-like protein 9 (204 aa).

Positions 1–26 are cleaved as a signal peptide; that stretch reads MMRTLITTHPLLLLLLLQQLLQPVQF. Disulfide bonds link Cys97–Cys152, Cys115–Cys167, and Cys122–Cys129. 2 N-linked (GlcNAc...) asparagine glycosylation sites follow: Asn130 and Asn142.

The protein belongs to the pancreatic ribonuclease family.

The protein localises to the secreted. Functionally, does not exhibit any ribonuclease activity. In Macaca mulatta (Rhesus macaque), this protein is Inactive ribonuclease-like protein 9 (RNASE9).